The sequence spans 534 residues: Inorganic phosphate transporter 1-6 (534 aa).

The Cytoplasmic segment spans residues 1–29; sequence MGGGGGEQQQLEVLHALDVAKTQWYHFTA. Residues 30-50 traverse the membrane as a helical segment; sequence IVVAGMGFFTDAYDLFCISLV. The Extracellular portion of the chain corresponds to 51 to 75; that stretch reads TKLLGRIYYRVDGSPSPGTLPPHVS. A helical transmembrane segment spans residues 76–96; sequence ASVNGVAFVGTLSGQLFFGWL. At 97 to 104 the chain is on the cytoplasmic side; the sequence is GDKLGRKR. Residues 105-125 traverse the membrane as a helical segment; sequence VYGITLMLMVLCSLASALSFG. Over 126-127 the chain is Extracellular; that stretch reads HT. A helical transmembrane segment spans residues 128–148; the sequence is PTSVMATLCFFRFWLGFGIGG. Residues 149–168 are Cytoplasmic-facing; that stretch reads DYPLSATIMSEYANKKTRGA. The helical transmembrane segment at 169–189 threads the bilayer; that stretch reads FIAAVFAMQGFGIITGGLVAI. At 190 to 216 the chain is on the extracellular side; sequence LVSASFRAAFPAPPYGEDPVASTPPQA. A helical membrane pass occupies residues 217–237; sequence DFVWRIILMLGALPAALTYYW. Residues 238 to 294 lie on the Cytoplasmic side of the membrane; sequence RTKMPETARYTALVANNAKQAAADMSKVLQVVEMRNIGNNGGSRRPFGLFSGEFVRR. The chain crosses the membrane as a helical span at residues 295 to 315; sequence HGLHLVGTSATWLLLDIAFYS. The Extracellular segment spans residues 316-350; sequence QNLFQKDIFSAVGWIPKAATMSALEELFRIARAQT. The helical transmembrane segment at 351–371 threads the bilayer; the sequence is LIALCGTVPGYWFTVALIDVV. The Cytoplasmic portion of the chain corresponds to 372–375; the sequence is GRFK. Residues 376–396 traverse the membrane as a helical segment; it reads IQAVGFFMMTLFMLTLALPYH. The Extracellular portion of the chain corresponds to 397–405; it reads HWTAPGKNH. Residues 406-426 traverse the membrane as a helical segment; sequence VGFLLLYGLTFFFANFGPNST. The Cytoplasmic segment spans residues 427–445; it reads TFIVPAEIFPARLRATCHG. The helical transmembrane segment at 446–466 threads the bilayer; it reads ISAASGKLGAIVGSFGFLYLA. Over 467–486 the chain is Extracellular; it reads QSPDRSKTEHGYPPGIGVRN. Residues 487–507 form a helical membrane-spanning segment; the sequence is SLFLLAACNLLGLLFTFLVPE. Residues 508 to 534 lie on the Cytoplasmic side of the membrane; sequence SKGKSLEEMSGDAEAQEEAPPPLQTVL. The disordered stretch occupies residues 514-534; sequence EEMSGDAEAQEEAPPPLQTVL.

Belongs to the major facilitator superfamily. Phosphate:H(+) symporter (TC 2.A.1.9) family. In terms of tissue distribution, highly expressed in leaves and at low levels in roots. Expressed in leaf xylem parenchyma cells.

It is found in the membrane. Functionally, high-affinity transporter for external inorganic phosphate (Pi). Probably involved in Pi uptake, translocation and internal transport throughout the plant. The chain is Inorganic phosphate transporter 1-6 (PHT1-6) from Oryza sativa subsp. japonica (Rice).